A 428-amino-acid polypeptide reads, in one-letter code: Tyrosine--tRNA ligase (428 aa).

Tyrosine 41 contacts L-tyrosine. A 'HIGH' region motif is present at residues 46 to 55; it reads PTADSLHLGH. Residues tyrosine 179 and glutamine 183 each coordinate L-tyrosine. Positions 239-243 match the 'KMSKS' region motif; sequence KFGKT. An ATP-binding site is contributed by lysine 242. The 58-residue stretch at 361 to 418 folds into the S4 RNA-binding domain; it reads ADLLQALVDSELQPSRGQARKTVASNAVTINGEKQADPEYVFSDSDRLFGRYTLLRRG.

The protein belongs to the class-I aminoacyl-tRNA synthetase family. TyrS type 1 subfamily. In terms of assembly, homodimer.

Its subcellular location is the cytoplasm. The enzyme catalyses tRNA(Tyr) + L-tyrosine + ATP = L-tyrosyl-tRNA(Tyr) + AMP + diphosphate + H(+). In terms of biological role, catalyzes the attachment of tyrosine to tRNA(Tyr) in a two-step reaction: tyrosine is first activated by ATP to form Tyr-AMP and then transferred to the acceptor end of tRNA(Tyr). The polypeptide is Tyrosine--tRNA ligase (Klebsiella pneumoniae subsp. pneumoniae (strain ATCC 700721 / MGH 78578)).